A 270-amino-acid polypeptide reads, in one-letter code: Gene 1 protein (270 aa).

The disordered stretch occupies residues 225 to 249 (WAEEDPPVAAVPLEPEDATAPGKEP).

The polypeptide is Gene 1 protein (1) (Mycobacterium (Mycobacteriophage D29)).